A 798-amino-acid chain; its full sequence is Integrin beta-1-B (798 aa).

Residues 1-21 (MARYPVFTFVFLICLVLCTNA) form the signal peptide. Residues 22 to 727 (QQGGTECLKA…VKEPECPSGP (706 aa)) are Extracellular-facing. The 51-residue stretch at 27 to 77 (ECLKANAKSCGECIQAGPNCGWCTKVDFLQEGEPTSARCDDLAALKTKGCP) folds into the PSI domain. 28 cysteine pairs are disulfide-bonded: Cys28–Cys46, Cys36–Cys464, Cys39–Cys65, Cys49–Cys76, Cys206–Cys212, Cys260–Cys300, Cys400–Cys414, Cys434–Cys462, Cys466–Cys486, Cys477–Cys489, Cys491–Cys500, Cys502–Cys533, Cys516–Cys531, Cys525–Cys536, Cys538–Cys553, Cys555–Cys576, Cys560–Cys574, Cys568–Cys579, Cys581–Cys590, Cys592–Cys615, Cys599–Cys613, Cys607–Cys618, Cys620–Cys630, Cys633–Cys636, Cys640–Cys691, Cys646–Cys665, Cys649–Cys661, and Cys699–Cys723. Residues 77 to 106 (PEDDIQNPRGRKQKLKDIPITSKGKGERMD) form a disordered region. Residues Asn109 and Asn131 are each glycosylated (N-linked (GlcNAc...) asparagine). Residues 139-377 (DYPIDLYYLM…QLIIDSYNSL (239 aa)) enclose the VWFA domain. The Mg(2+) site is built by Ser151 and Ser153. Ca(2+) is bound by residues Ser153, Asp156, Asp157, and Glu188. Residues Asn211 and Asn223 are each glycosylated (N-linked (GlcNAc...) asparagine). Ca(2+)-binding residues include Asn243, Asp245, Pro247, and Glu248. Residue Glu248 participates in Mg(2+) binding. N-linked (GlcNAc...) asparagine glycans are attached at residues Asn268 and Asn362. Asn416 carries an N-linked (GlcNAc...) asparagine glycan. I-EGF domains lie at 466 to 501 (CQDK…KECE), 502 to 554 (CSTD…KYCE), 555 to 591 (CDNF…SACD), and 592 to 631 (CSED…PTCE). Asn481 carries an N-linked (GlcNAc...) asparagine glycan. Asn520 carries N-linked (GlcNAc...) asparagine glycosylation. The N-linked (GlcNAc...) asparagine glycan is linked to Asn584. Asn669 is a glycosylation site (N-linked (GlcNAc...) asparagine). Residues 728 to 751 (DIIPIVAGVVAGIVLIGLALLLIW) form a helical membrane-spanning segment. Topologically, residues 752–798 (KLLMIIHDRREFAKFEKEKMNAKWDTGENPIYKSAVATVVNPKYEGK) are cytoplasmic. Tyr783 carries the post-translational modification Phosphotyrosine.

The protein belongs to the integrin beta chain family. In terms of assembly, heterodimer of an alpha and a beta subunit.

The protein localises to the cell membrane. It is found in the cell projection. Its subcellular location is the invadopodium membrane. It localises to the ruffle membrane. The protein resides in the melanosome. The protein localises to the cleavage furrow. It is found in the lamellipodium. Its subcellular location is the ruffle. Functionally, beta integrins associate with alpha subunits to form receptor complexes that recognize the sequence R-G-D in a wide array of ligands. May be involved in osteoblast compaction. May play role in myoblast differentiation and fusion during skeletal myogenesis. The chain is Integrin beta-1-B (itgb1-b) from Xenopus laevis (African clawed frog).